The sequence spans 195 residues: MSFTSKTSKSHAEATVNKLFSSLLPGTQGTTSKQSSSLSSAELLSIEIENKNKLSKEELKKIHKQNKFKQHKKIKKALEDEKRFNKLAKYHLIKHHKTGGELSEEEAKYLKKLVKKNVNSLNRVSEIDDMEIKSELDQVRQDILKINKEKHDKKAKRIQNKKTKDFNSKVAKGMISYPGLTPGLAPVGLDDSDDE.

Belongs to the RRT14 family.

The protein localises to the nucleus. It localises to the nucleolus. Involved in ribosome biogenesis, probably through modulation of rDNA transcription. This chain is Regulator of rDNA transcription 14 (RRT14), found in Debaryomyces hansenii (strain ATCC 36239 / CBS 767 / BCRC 21394 / JCM 1990 / NBRC 0083 / IGC 2968) (Yeast).